Reading from the N-terminus, the 204-residue chain is NAD(P)H dehydrogenase (quinone) FQR1 (204 aa).

The region spanning 5-192 (VYIVYYSMYG…QQAFHQGQYI (188 aa)) is the Flavodoxin-like domain. FMN-binding positions include 11 to 15 (SMYGH), 112 to 165 (IFYS…SPYG), and His136. NAD(+) is bound at residue Tyr13.

The protein belongs to the WrbA family. FMN is required as a cofactor.

The protein localises to the cell membrane. The catalysed reaction is a quinone + NADH + H(+) = a quinol + NAD(+). It catalyses the reaction a quinone + NADPH + H(+) = a quinol + NADP(+). Catalyzes the transfer of electrons from NADH and NADPH to several quinones in vitro. May act as detoxification enzyme, and protect against auxin-induced oxidative stress. The sequence is that of NAD(P)H dehydrogenase (quinone) FQR1 from Arabidopsis thaliana (Mouse-ear cress).